The following is a 440-amino-acid chain: Probable D-serine dehydratase (440 aa).

N6-(pyridoxal phosphate)lysine is present on Lys111.

This sequence belongs to the serine/threonine dehydratase family. DsdA subfamily. Pyridoxal 5'-phosphate serves as cofactor.

The catalysed reaction is D-serine = pyruvate + NH4(+). The polypeptide is Probable D-serine dehydratase (Rhizobium leguminosarum bv. trifolii (strain WSM2304)).